The chain runs to 748 residues: E3 ubiquitin-protein ligase SMURF2 (748 aa).

A C2 domain is found at 1 to 119 (MSNPGGRRNG…TGYQRLDLCK (119 aa)). Residue lysine 119 forms a Glycyl lysine isopeptide (Lys-Gly) (interchain with G-Cter in ubiquitin) linkage. WW domains are found at residues 157 to 190 (NDLP…RPTR), 251 to 284 (PDLP…DPRV), and 297 to 330 (GPLP…DPRL). In terms of domain architecture, HECT spans 414 to 748 (RPKDLWKRLM…IEETCGFAVE (335 aa)). Cysteine 716 serves as the catalytic Glycyl thioester intermediate.

Interacts (via WW domains) with SMAD1. Interacts (via WW domains) with SMAD2 (via PY-motif). Interacts (via WW domains) with SMAD3 (via PY-motif). Interacts with SMAD6. Interacts with SMAD7 (via PY-motif) and TGFBR1; SMAD7 recruits SMURF2 to the TGF-beta receptor and regulates its degradation. Does not interact with SMAD4; SMAD4 lacks a PY-motif. Interacts with AIMP1. Interacts with NDFIP1 and NDFIP2; this interaction activates the E3 ubiquitin-protein ligase. Interacts with TTC3. Auto-ubiquitinated and ubiquitinated in the presence of RNF11 and UBE2D1. Ubiquitinated by the SCF(FBXL15) complex and TTC3, leading to its degradation by the proteasome. 'Lys-48'-linked polyubiquitination mediated by TRAF4 at Lys-119 leads to SMURF2 proteasomal degradation.

It is found in the nucleus. The protein resides in the cytoplasm. The protein localises to the cell membrane. Its subcellular location is the membrane raft. The enzyme catalyses S-ubiquitinyl-[E2 ubiquitin-conjugating enzyme]-L-cysteine + [acceptor protein]-L-lysine = [E2 ubiquitin-conjugating enzyme]-L-cysteine + N(6)-ubiquitinyl-[acceptor protein]-L-lysine.. Its pathway is protein modification; protein ubiquitination. With respect to regulation, activated by NDFIP1- and NDFIP2-binding. Its function is as follows. E3 ubiquitin-protein ligase which accepts ubiquitin from an E2 ubiquitin-conjugating enzyme in the form of a thioester and then directly transfers the ubiquitin to targeted substrates. Interacts with SMAD7 to trigger SMAD7-mediated transforming growth factor beta/TGF-beta receptor ubiquitin-dependent degradation, thereby down-regulating TGF-beta signaling. In addition, interaction with SMAD7 activates autocatalytic degradation, which is prevented by interaction with AIMP1. Also forms a stable complex with TGF-beta receptor-mediated phosphorylated SMAD1, SMAD2 and SMAD3, and targets SMAD1 and SMAD2 for ubiquitination and proteasome-mediated degradation. SMAD2 may recruit substrates, such as SNON, for ubiquitin-dependent degradation. Negatively regulates TGFB1-induced epithelial-mesenchymal transition and myofibroblast differentiation. This chain is E3 ubiquitin-protein ligase SMURF2, found in Mus musculus (Mouse).